The sequence spans 165 residues: Regulator of sigma D (165 aa).

This sequence belongs to the Rsd/AlgQ family. As to quaternary structure, interacts with RpoD.

It is found in the cytoplasm. Functionally, binds RpoD and negatively regulates RpoD-mediated transcription activation by preventing the interaction between the primary sigma factor RpoD with the catalytic core of the RNA polymerase and with promoter DNA. May be involved in replacement of the RNA polymerase sigma subunit from RpoD to RpoS during the transition from exponential growth to the stationary phase. The sequence is that of Regulator of sigma D from Enterobacter sp. (strain 638).